We begin with the raw amino-acid sequence, 710 residues long: Ephexin-1 (710 aa).

Composition is skewed to basic and acidic residues over residues methionine 1–lysine 11 and glutamate 26–threonine 41. The tract at residues methionine 1–tryptophan 143 is disordered. Positions methionine 1 to lysine 273 are regulatory region; modulates activity toward RHOA, RAC1 and CDC42. 2 stretches are compositionally biased toward polar residues: residues alanine 89–leucine 102 and methionine 127–asparagine 136. Tyrosine 179 is subject to Phosphotyrosine. The interval arginine 194 to leucine 236 is disordered. Residues aspartate 213–proline 227 are compositionally biased toward acidic residues. The region spanning lysine 273 to glycine 457 is the DH domain. The region spanning tryptophan 489–arginine 601 is the PH domain. Residues leucine 612–asparagine 673 form the SH3 domain. Residues valine 687 to lysine 699 show a composition bias toward basic and acidic residues. A disordered region spans residues valine 687–glutamine 710. The segment covering aspartate 700–glutamine 710 has biased composition (basic residues).

As to quaternary structure, interacts with CDK5R1 and EPHA4; activated by EPHA4 through the CDK5 kinase. Src-dependent phosphorylation at Tyr-179 upon EPHA4 activation increases the guanine exchange factor activity toward RHOA. Phosphorylation by CDK5 upon EPHA4 activation by EFNA1 may regulate dendritic spine morphogenesis. As to expression, highly expressed in brain specifically in caudate nucleus and to a lower extent in amygdala and hippocampus. Also detected in lung.

It localises to the cytoplasm. Its subcellular location is the membrane. The protein localises to the cell projection. It is found in the growth cone. Its function is as follows. Acts as a guanine nucleotide exchange factor (GEF) which differentially activates the GTPases RHOA, RAC1 and CDC42. Plays a role in axon guidance regulating ephrin-induced growth cone collapse and dendritic spine morphogenesis. Upon activation by ephrin through EPHA4, the GEF activity switches toward RHOA resulting in its activation. Activated RHOA promotes cone retraction at the expense of RAC1- and CDC42-stimulated growth cone extension. The protein is Ephexin-1 (NGEF) of Homo sapiens (Human).